We begin with the raw amino-acid sequence, 383 residues long: Protein arginine N-methyltransferase PRMT10 (383 aa).

The segment at 1-23 is disordered; that stretch reads MRSSQNGGAMGGRAAGTGGGGPS. Over residues 8-22 the composition is skewed to gly residues; that stretch reads GAMGGRAAGTGGGGP. The region spanning 29–360 is the SAM-dependent MTase PRMT-type domain; it reads EVDYAQYFCT…KENHRLMEIE (332 aa). 5 residues coordinate S-adenosyl-L-methionine: Gln-45, Arg-54, Gly-78, Glu-100, and Glu-129. Residues Glu-143 and Glu-152 contribute to the active site. Residues 190–230 are dimerization arm; that stretch reads DRKRNDFDGAMADWHNFSDEIKSYYGVDMGVLTKPFAEEQE.

Belongs to the class I-like SAM-binding methyltransferase superfamily. Protein arginine N-methyltransferase family. Ring-like homodimer.

The enzyme catalyses L-arginyl-[protein] + 2 S-adenosyl-L-methionine = N(omega),N(omega)-dimethyl-L-arginyl-[protein] + 2 S-adenosyl-L-homocysteine + 2 H(+). Methylates (mono and asymmetric dimethylation) the guanidino nitrogens of arginyl residues in some proteins. Essential for regulating flowering time. In Arabidopsis thaliana (Mouse-ear cress), this protein is Protein arginine N-methyltransferase PRMT10 (PRMT10).